We begin with the raw amino-acid sequence, 434 residues long: Xylose isomerase (434 aa).

Residues histidine 100 and aspartate 103 contribute to the active site. Mg(2+) is bound by residues glutamate 231, glutamate 267, histidine 270, aspartate 295, aspartate 306, aspartate 308, and aspartate 338.

The protein belongs to the xylose isomerase family. Homotetramer. Requires Mg(2+) as cofactor.

Its subcellular location is the cytoplasm. The catalysed reaction is alpha-D-xylose = alpha-D-xylulofuranose. This chain is Xylose isomerase, found in Ruegeria pomeroyi (strain ATCC 700808 / DSM 15171 / DSS-3) (Silicibacter pomeroyi).